The sequence spans 157 residues: ATP synthase subunit b' (157 aa).

A helical transmembrane segment spans residues 22–42; that stretch reads ATLPIIAVQFLLLVAVLNSLF.

This sequence belongs to the ATPase B chain family. As to quaternary structure, F-type ATPases have 2 components, F(1) - the catalytic core - and F(0) - the membrane proton channel. F(1) has five subunits: alpha(3), beta(3), gamma(1), delta(1), epsilon(1). F(0) has four main subunits: a(1), b(1), b'(1) and c(10-14). The alpha and beta chains form an alternating ring which encloses part of the gamma chain. F(1) is attached to F(0) by a central stalk formed by the gamma and epsilon chains, while a peripheral stalk is formed by the delta, b and b' chains.

The protein localises to the cellular thylakoid membrane. In terms of biological role, f(1)F(0) ATP synthase produces ATP from ADP in the presence of a proton or sodium gradient. F-type ATPases consist of two structural domains, F(1) containing the extramembraneous catalytic core and F(0) containing the membrane proton channel, linked together by a central stalk and a peripheral stalk. During catalysis, ATP synthesis in the catalytic domain of F(1) is coupled via a rotary mechanism of the central stalk subunits to proton translocation. Functionally, component of the F(0) channel, it forms part of the peripheral stalk, linking F(1) to F(0). The b'-subunit is a diverged and duplicated form of b found in plants and photosynthetic bacteria. The chain is ATP synthase subunit b' from Synechococcus sp. (strain JA-3-3Ab) (Cyanobacteria bacterium Yellowstone A-Prime).